We begin with the raw amino-acid sequence, 1053 residues long: Middle cell wall protein (1053 aa).

The N-terminal stretch at 1 to 23 (MKKVVNSVLASALALTVAPMAFA) is a signal peptide. SLH domains lie at 26 to 89 (EAAT…KLAQ), 90 to 153 (FSNT…KGVW), and 154 to 203 (PNSM…FGTD).

The middle cell wall layer is composed of subunits of the middle cell wall protein. These proteins form a hexagonal array with a lattice constant of 14.5 nM in the middle cell wall layers.

Its subcellular location is the secreted. It localises to the cell wall. The protein resides in the S-layer. Functionally, the middle wall protein binds to peptidoglycan and to the outer cell wall protein. The chain is Middle cell wall protein from Brevibacillus brevis (strain 47 / JCM 6285 / NBRC 100599).